Here is a 320-residue protein sequence, read N- to C-terminus: Pseudouridine-5'-phosphate glycosidase (320 aa).

The active-site Proton donor is the glutamate 25. Substrate-binding residues include lysine 85 and valine 105. Mn(2+) is bound at residue aspartate 137. Serine 139 to aspartate 141 serves as a coordination point for substrate. The Nucleophile role is filled by lysine 158.

It belongs to the pseudouridine-5'-phosphate glycosidase family. In terms of assembly, homotrimer. The cofactor is Mn(2+).

It carries out the reaction D-ribose 5-phosphate + uracil = psi-UMP + H2O. Its function is as follows. Catalyzes the reversible cleavage of pseudouridine 5'-phosphate (PsiMP) to ribose 5-phosphate and uracil. Functions biologically in the cleavage direction, as part of a pseudouridine degradation pathway. The chain is Pseudouridine-5'-phosphate glycosidase from Rhodospirillum centenum (strain ATCC 51521 / SW).